Consider the following 157-residue polypeptide: Large ribosomal subunit protein uL15 (157 aa).

Residues 1-41 (MKLHELSDNPGATKKRKRVGRGPGSGTGKMGGRGIKGQKSR) form a disordered region. The span at 21 to 35 (RGPGSGTGKMGGRGI) shows a compositional bias: gly residues.

Belongs to the universal ribosomal protein uL15 family. Part of the 50S ribosomal subunit.

Functionally, binds to the 23S rRNA. This chain is Large ribosomal subunit protein uL15, found in Jannaschia sp. (strain CCS1).